We begin with the raw amino-acid sequence, 134 residues long: Small ribosomal subunit protein uS8c (134 aa).

This sequence belongs to the universal ribosomal protein uS8 family. In terms of assembly, part of the 30S ribosomal subunit.

The protein resides in the plastid. It is found in the chloroplast. One of the primary rRNA binding proteins, it binds directly to 16S rRNA central domain where it helps coordinate assembly of the platform of the 30S subunit. This chain is Small ribosomal subunit protein uS8c (rps8), found in Nicotiana tomentosiformis (Tobacco).